The primary structure comprises 218 residues: Transcription initiation factor TFIID subunit 10 (218 aa).

2 stretches are compositionally biased toward low complexity: residues 1 to 21 (MSCS…ASAP) and 29 to 39 (APAALPSSTAA). Residues 1–85 (MSCSGSGADP…GAAPVSAGGA (85 aa)) form a disordered region. An N-acetylserine modification is found at S2. At S44 the chain carries Phosphoserine. T48 is subject to Phosphothreonine. Positions 48–62 (TAGGPGAGAAAGGTG) are enriched in gly residues. The [KR]-[STA]-K motif motif lies at 187–189 (KSK). At K189 the chain carries Allysine; alternate. K189 is subject to N6,N6,N6-trimethyllysine; alternate.

Belongs to the TAF10 family. Component of the TFIID basal transcription factor complex, composed of TATA-box-binding protein TBP, and a number of TBP-associated factors (TAFs), including TAF1, TAF2, TAF3, TAF4, TAF5, TAF6, TAF7, TAF8, TAF9, TAF10, TAF11, TAF12 and TAF13. Component of the TATA-binding protein-free TAF complex (TFTC), the PCAF histone acetylase complex and the STAGA transcription coactivator-HAT complex. The PCAF complex consists at least of TADA2L/ADA2, TADA3L/ADA3, SUPT3H, TAF5L TAF6L, TAF9, TAF10, TAF12 and TRRAP. The TFTC-HAT complex consists at least of TAF5L, TAF6L, TADA3L, SUPT3H, TAF2, TAF4, TAF5, GCN5L2/GCN5, TAF10 and TRRAP. The STAGA transcription coactivator-HAT complex consists at least of SUPT3H, GCN5L2, TAF5L, TAF6L, SUPT7L, TADA3L, TAD1L, TAF10, TAF12, TRRAP and TAF9. The STAGA core complex is associated with a subcomplex required for histone deubiquitination composed of ATXN7L3, ENY2 and USP22. Interacts with TAF3. Interacts with LOXL2. Interacts with TAF12 isoform TAFII20; the interaction is direct. Monomethylated at Lys-189 by SETD7, leading to increased affinity for RNA polymerase II. Post-translationally, lysine deamination at Lys-189 to form allysine is mediated by LOXL2. Allysine formation by LOXL2 results in release of TAF10 from promoters, leading to inhibition of TFIID-dependent transcription.

Its subcellular location is the nucleus. In terms of biological role, the TFIID basal transcription factor complex plays a major role in the initiation of RNA polymerase II (Pol II)-dependent transcription. TFIID recognizes and binds promoters with or without a TATA box via its subunit TBP, a TATA-box-binding protein, and promotes assembly of the pre-initiation complex (PIC). The TFIID complex consists of TBP and TBP-associated factors (TAFs), including TAF1, TAF2, TAF3, TAF4, TAF5, TAF6, TAF7, TAF8, TAF9, TAF10, TAF11, TAF12 and TAF13. TAF10 is also component of the PCAF histone acetylase complex, the TATA-binding protein-free TAF complex (TFTC) and the STAGA transcription coactivator-HAT complex. May regulate cyclin E expression. The protein is Transcription initiation factor TFIID subunit 10 (TAF10) of Homo sapiens (Human).